The chain runs to 249 residues: Proline-rich antigen (249 aa).

2 stretches are compositionally biased toward pro residues: residues 1 to 20 (MTDQ…PPPG) and 38 to 87 (YPPP…PPGP). Residues 1-87 (MTDQPPPSGS…GAYAPPPPGP (87 aa)) form a disordered region. One copy of the 1-1; approximate repeat lies at 34–43 (LGSAYPPPTA). The tract at residues 34–85 (LGSAYPPPTAPPVGGSYPPPPPPGGSYPPPPPPGGSYPPPPPSTGAYAPPPP) is 5 X 10 AA tandem repeats of [PV]-G-G-S-Y-P-P-P-P-P. 3 consecutive repeat copies span residues 46-55 (VGGSYPPPPP), 56-65 (PGGSYPPPPP), and 66-75 (PGGSYPPPPP). A 1-5; approximate repeat occupies 76–85 (STGAYAPPPP). The RDD domain maps to 99–242 (FWVTRVLAYV…KRQTLADKIM (144 aa)). A run of 2 repeats spans residues 101 to 123 (VTRV…IGML) and 134 to 156 (VTDI…IGML). Positions 101 to 156 (VTRVLAYVIDNIPATVLLGIGMLIQTLTKQEACVTDITQYNVNQYCATQPTGIGML) are 2 X 23 AA approximate repeats. The next 3 helical transmembrane spans lie at 104 to 124 (VLAY…GMLI), 151 to 171 (TGIG…YLVW), and 212 to 232 (LAHF…LWDS).

It belongs to the mycobacterial Pra family.

Its subcellular location is the cell membrane. The protein is Proline-rich antigen (ag36) of Mycobacterium leprae (strain TN).